The following is a 490-amino-acid chain: Scarecrow-like transcription factor PAT1 (490 aa).

Residues 110-490 (TLEAISRRDL…RDLVASCAWK (381 aa)) form the GRAS domain. The leucine repeat I (LRI) stretch occupies residues 117–178 (RDLRADLVSC…AQLASSGSSI (62 aa)). Residues 197–262 (MHILYEVCPY…GGPPRIRITG (66 aa)) are VHIID. The VHIID motif lies at 228-232 (VHIID). The segment at 278-310 (IVGNRLAKLAKQFNVPFEFNSVSVSVSEVKPKN) is leucine repeat II (LRII). The PFYRE stretch occupies residues 319–413 (LAVNFAFVLH…QHCLARDVVN (95 aa)). The segment at 416–490 (ACEGADRVER…RDLVASCAWK (75 aa)) is SAW.

The protein belongs to the GRAS family.

It is found in the cytoplasm. Its function is as follows. Probable transcription factor involved in phytochrome A (phyA) signal transduction. The sequence is that of Scarecrow-like transcription factor PAT1 (PAT1) from Arabidopsis thaliana (Mouse-ear cress).